The primary structure comprises 301 residues: Zinc finger protein LEE1 (301 aa).

Residues 1–25 (MDAFENMSVSNHPGGNARRNSQSAN) form a disordered region. A compositionally biased stretch (polar residues) spans 7–25 (MSVSNHPGGNARRNSQSAN). Phosphoserine is present on residues Ser21 and Ser30. 2 C3H1-type zinc fingers span residues 87–114 (DYSHVPCKFFKMGNCQAGSSCPFSHSPD) and 123–145 (PCKYFAKGNCKFGNKCVNAHVLP). Ser282 bears the Phosphoserine mark.

The sequence is that of Zinc finger protein LEE1 (LEE1) from Saccharomyces cerevisiae (strain ATCC 204508 / S288c) (Baker's yeast).